Here is a 195-residue protein sequence, read N- to C-terminus: Recombination protein RecR (195 aa).

The C4-type zinc-finger motif lies at cysteine 53–cysteine 68. In terms of domain architecture, Toprim spans serine 76 to proline 171.

This sequence belongs to the RecR family.

Its function is as follows. May play a role in DNA repair. It seems to be involved in an RecBC-independent recombinational process of DNA repair. It may act with RecF and RecO. In Anaplasma marginale (strain St. Maries), this protein is Recombination protein RecR.